The sequence spans 431 residues: Enolase (431 aa).

Position 163 (Gln163) interacts with (2R)-2-phosphoglycerate. Glu205 serves as the catalytic Proton donor. Asp242, Glu288, and Asp315 together coordinate Mg(2+). The (2R)-2-phosphoglycerate site is built by Lys340, Arg369, Ser370, and Lys391. Lys340 (proton acceptor) is an active-site residue.

Belongs to the enolase family. Mg(2+) serves as cofactor.

The protein localises to the cytoplasm. The protein resides in the secreted. It localises to the cell surface. The enzyme catalyses (2R)-2-phosphoglycerate = phosphoenolpyruvate + H2O. Its pathway is carbohydrate degradation; glycolysis; pyruvate from D-glyceraldehyde 3-phosphate: step 4/5. Its function is as follows. Catalyzes the reversible conversion of 2-phosphoglycerate (2-PG) into phosphoenolpyruvate (PEP). It is essential for the degradation of carbohydrates via glycolysis. The protein is Enolase of Bacillus cereus (strain B4264).